A 215-amino-acid chain; its full sequence is Probable phosphoglycerate mutase GpmB (215 aa).

Residues 8–15 (RHGETQWN), 21–22 (QG), Arg-58, Arg-60, 82–85 (ELDM), 104–105 (RR), and 151–152 (GI) each bind substrate. His-9 functions as the Tele-phosphohistidine intermediate in the catalytic mechanism. The Proton donor/acceptor role is filled by Glu-82.

The protein belongs to the phosphoglycerate mutase family. GpmB subfamily.

It catalyses the reaction (2R)-2-phosphoglycerate = (2R)-3-phosphoglycerate. It functions in the pathway carbohydrate degradation; glycolysis; pyruvate from D-glyceraldehyde 3-phosphate: step 3/5. This chain is Probable phosphoglycerate mutase GpmB, found in Klebsiella pneumoniae (strain 342).